We begin with the raw amino-acid sequence, 207 residues long: Outer-membrane lipoprotein LolB (207 aa).

An N-terminal signal peptide occupies residues 1 to 21 (MPLPDFRLIRLLPLAALVLTA). Cysteine 22 is lipidated: N-palmitoyl cysteine. Cysteine 22 carries the S-diacylglycerol cysteine lipid modification.

This sequence belongs to the LolB family. Monomer.

The protein resides in the cell outer membrane. In terms of biological role, plays a critical role in the incorporation of lipoproteins in the outer membrane after they are released by the LolA protein. The sequence is that of Outer-membrane lipoprotein LolB from Shigella dysenteriae serotype 1 (strain Sd197).